Here is a 234-residue protein sequence, read N- to C-terminus: Gem-associated protein 8 (234 aa).

The disordered stretch occupies residues 60–116 (LAQSPAAKGGTSPKSRSKSPSASGDACRRRSRPGKPGPQRRSTEKPARFAEDNDSES). Positions 67–83 (KGGTSPKSRSKSPSASG) are enriched in low complexity. Residues 100-110 (RSTEKPARFAE) are compositionally biased toward basic and acidic residues. Positions 130 to 153 (ITDELRQYFAETEQHREELRRQHQ) form a coiled coil.

In terms of assembly, part of the core SMN complex that contains SMN1, GEMIN2/SIP1, DDX20/GEMIN3, GEMIN4, GEMIN5, GEMIN6, GEMIN7, GEMIN8 and STRAP/UNRIP. Part of the SMN-Sm complex that contains SMN1, GEMIN2/SIP1, DDX20/GEMIN3, GEMIN4, GEMIN5, GEMIN6, GEMIN7, GEMIN8, STRAP/UNRIP and the Sm proteins SNRPB, SNRPD1, SNRPD2, SNRPD3, SNRPE, SNRPF and SNRPG. Interacts with GEMIN6; the interaction is direct. Interacts with GEMIN7; the interaction is direct. Interacts with SMN1; the interaction is direct. Interacts with GEMIN4; the interaction is direct.

Its subcellular location is the nucleus. The protein localises to the gem. The protein resides in the cytoplasm. Functionally, the SMN complex catalyzes the assembly of small nuclear ribonucleoproteins (snRNPs), the building blocks of the spliceosome, and thereby plays an important role in the splicing of cellular pre-mRNAs. Most spliceosomal snRNPs contain a common set of Sm proteins SNRPB, SNRPD1, SNRPD2, SNRPD3, SNRPE, SNRPF and SNRPG that assemble in a heptameric protein ring on the Sm site of the small nuclear RNA to form the core snRNP (Sm core). In the cytosol, the Sm proteins SNRPD1, SNRPD2, SNRPE, SNRPF and SNRPG are trapped in an inactive 6S pICln-Sm complex by the chaperone CLNS1A that controls the assembly of the core snRNP. To assemble core snRNPs, the SMN complex accepts the trapped 5Sm proteins from CLNS1A forming an intermediate. Binding of snRNA inside 5Sm triggers eviction of the SMN complex, thereby allowing binding of SNRPD3 and SNRPB to complete assembly of the core snRNP. This Bos taurus (Bovine) protein is Gem-associated protein 8 (GEMIN8).